The sequence spans 296 residues: NAD kinase (296 aa).

The active-site Proton acceptor is the D78. NAD(+)-binding positions include 78-79, 152-153, R180, D182, and Q251; these read DG and ND.

This sequence belongs to the NAD kinase family. It depends on a divalent metal cation as a cofactor.

The protein resides in the cytoplasm. The catalysed reaction is NAD(+) + ATP = ADP + NADP(+) + H(+). Its function is as follows. Involved in the regulation of the intracellular balance of NAD and NADP, and is a key enzyme in the biosynthesis of NADP. Catalyzes specifically the phosphorylation on 2'-hydroxyl of the adenosine moiety of NAD to yield NADP. The polypeptide is NAD kinase (Neisseria meningitidis serogroup C (strain 053442)).